The primary structure comprises 210 residues: Transposable element activator uncharacterized 23 kDa protein (210 aa).

Residues 67-78 (SGRMGGPRRDGR) are compositionally biased toward basic and acidic residues. The interval 67 to 87 (SGRMGGPRRDGRVASSGVEGG) is disordered.

This is Transposable element activator uncharacterized 23 kDa protein from Zea mays (Maize).